The sequence spans 149 residues: Probable flagellum biosynthesis repressor protein FlbT (149 aa).

It belongs to the FlbT family.

Has a post-transcriptional repressor function in flagellum biogenesis. Associates with the 5'-UTR of fljK mRNA and promotes its degradation. The chain is Probable flagellum biosynthesis repressor protein FlbT from Agrobacterium fabrum (strain C58 / ATCC 33970) (Agrobacterium tumefaciens (strain C58)).